A 249-amino-acid polypeptide reads, in one-letter code: 5'-nucleotidase SurE (249 aa).

A divalent metal cation contacts are provided by aspartate 9, aspartate 10, serine 40, and asparagine 92.

This sequence belongs to the SurE nucleotidase family. Requires a divalent metal cation as cofactor.

The protein localises to the cytoplasm. The catalysed reaction is a ribonucleoside 5'-phosphate + H2O = a ribonucleoside + phosphate. Its function is as follows. Nucleotidase that shows phosphatase activity on nucleoside 5'-monophosphates. This is 5'-nucleotidase SurE from Shewanella putrefaciens (strain CN-32 / ATCC BAA-453).